The following is a 252-amino-acid chain: N-glycosylase/DNA lyase (252 aa).

8-oxoguanine-binding residues include Q32, S60, and W71. Residues 129–193 (KTYYSDMEKL…KDSRIEKYTL (65 aa)) form a helix-hairpin-helix region. K153 acts as the Schiff-base intermediate with DNA in catalysis. Residues F157 and P183 each contribute to the 8-oxoguanine site. Residue D185 is part of the active site. The 8-oxoguanine site is built by D219 and W223.

It belongs to the archaeal N-glycosylase/DNA lyase (AGOG) family.

The enzyme catalyses 2'-deoxyribonucleotide-(2'-deoxyribose 5'-phosphate)-2'-deoxyribonucleotide-DNA = a 3'-end 2'-deoxyribonucleotide-(2,3-dehydro-2,3-deoxyribose 5'-phosphate)-DNA + a 5'-end 5'-phospho-2'-deoxyribonucleoside-DNA + H(+). Its function is as follows. DNA repair enzyme that is part of the base excision repair (BER) pathway; protects from oxidative damage by removing the major product of DNA oxidation, 8-oxoguanine (GO), from single- and double-stranded DNA substrates. The protein is N-glycosylase/DNA lyase of Methanococcus maripaludis (strain DSM 14266 / JCM 13030 / NBRC 101832 / S2 / LL).